Reading from the N-terminus, the 994-residue chain is Sarcoplasmic/endoplasmic reticulum calcium ATPase 1 (994 aa).

Over M1 to T48 the chain is Cytoplasmic. Residues I49 to A69 form a helical membrane-spanning segment. Residues C70 to V89 lie on the Lumenal side of the membrane. A helical transmembrane segment spans residues E90–R110. Over N111–L253 the chain is Cytoplasmic. A helical transmembrane segment spans residues D254–L273. Residues I274–Y295 are Lumenal-facing. The chain crosses the membrane as a helical span at residues F296–A313. Ca(2+) contacts are provided by V304, A305, I307, and E309. Over V314–M757 the chain is Cytoplasmic. D351 serves as the catalytic 4-aspartylphosphate intermediate. The Mg(2+) site is built by D351 and T353. ATP contacts are provided by T353, E442, R489, K515, R560, T625, G626, D627, R678, and K684. A Mg(2+)-binding site is contributed by D703. Residue N706 coordinates ATP. Residues K758–L777 traverse the membrane as a helical segment. The Ca(2+) site is built by N768 and E771. At T778–L787 the chain is on the lumenal side. A helical transmembrane segment spans residues I788 to G808. An interaction with PLN region spans residues I788–G808. Ca(2+)-binding residues include N796, T799, and D800. Residues F809–L828 lie on the Cytoplasmic side of the membrane. A helical membrane pass occupies residues I829 to A851. Residues A852–M897 lie on the Lumenal side of the membrane. Cysteines 876 and 888 form a disulfide. Residues T898–S917 form a helical membrane-spanning segment. E908 is a binding site for Ca(2+). At E918–N930 the chain is on the cytoplasmic side. A helical membrane pass occupies residues I931–Y949. Residues W932–L943 are interaction with PLN. At V950–L964 the chain is on the lumenal side. A helical membrane pass occupies residues A965–K985. The Cytoplasmic portion of the chain corresponds to F986–A994.

It belongs to the cation transport ATPase (P-type) (TC 3.A.3) family. Type IIA subfamily. Interacts with sarcolipin (SLN). Interacts with phospholamban (PLN). Interacts with myoregulin (MRLN). Interacts with DWORF. Requires Mg(2+) as cofactor.

It is found in the endoplasmic reticulum membrane. It localises to the sarcoplasmic reticulum membrane. It carries out the reaction Ca(2+)(in) + ATP + H2O = Ca(2+)(out) + ADP + phosphate + H(+). Its activity is regulated as follows. Inhibited by sarcolipin (SLN) and myoregulin (MRLN). Also shown to be inhibited by phospholamban (PLN) in vitro. Enhanced by DWORF; DWORF increases activity by displacing sarcolipin (SLN), phospholamban (PLN) and myoregulin (MRLN). Key regulator of striated muscle performance by acting as the major Ca(2+) ATPase responsible for the reuptake of cytosolic Ca(2+) into the sarcoplasmic reticulum. Catalyzes the hydrolysis of ATP coupled with the translocation of calcium from the cytosol to the sarcoplasmic reticulum lumen. Contributes to calcium sequestration involved in muscular excitation/contraction. The sequence is that of Sarcoplasmic/endoplasmic reticulum calcium ATPase 1 (ATP2A1) from Gallus gallus (Chicken).